The primary structure comprises 213 residues: Translation initiation factor IF-3 (213 aa).

Positions 193–213 are disordered; that stretch reads EKIASLPPLPPDNSGEPEDDE.

This sequence belongs to the IF-3 family. Monomer.

It localises to the cytoplasm. In terms of biological role, IF-3 binds to the 30S ribosomal subunit and shifts the equilibrium between 70S ribosomes and their 50S and 30S subunits in favor of the free subunits, thus enhancing the availability of 30S subunits on which protein synthesis initiation begins. This chain is Translation initiation factor IF-3, found in Chlorobaculum tepidum (strain ATCC 49652 / DSM 12025 / NBRC 103806 / TLS) (Chlorobium tepidum).